The following is a 495-amino-acid chain: Thiosulfate sulfurtransferase/rhodanese-like domain-containing protein 2 (495 aa).

Residue S268 is modified to Phosphoserine. The region spanning 300 to 395 (EQGNTIILDC…YLEEFPDGFY (96 aa)) is the Rhodanese domain. C354 serves as the catalytic Cysteine persulfide intermediate.

The protein is Thiosulfate sulfurtransferase/rhodanese-like domain-containing protein 2 (Tstd2) of Mus musculus (Mouse).